The chain runs to 251 residues: tRNA pseudouridine synthase A (251 aa).

Residue Asp-53 is the Nucleophile of the active site. Tyr-110 serves as a coordination point for substrate.

Belongs to the tRNA pseudouridine synthase TruA family. As to quaternary structure, homodimer.

It catalyses the reaction uridine(38/39/40) in tRNA = pseudouridine(38/39/40) in tRNA. Formation of pseudouridine at positions 38, 39 and 40 in the anticodon stem and loop of transfer RNAs. This Mesoplasma florum (strain ATCC 33453 / NBRC 100688 / NCTC 11704 / L1) (Acholeplasma florum) protein is tRNA pseudouridine synthase A.